An 874-amino-acid polypeptide reads, in one-letter code: Alanine--tRNA ligase (874 aa).

Zn(2+) contacts are provided by H562, H566, C665, and H669.

The protein belongs to the class-II aminoacyl-tRNA synthetase family. Zn(2+) serves as cofactor.

It localises to the cytoplasm. The catalysed reaction is tRNA(Ala) + L-alanine + ATP = L-alanyl-tRNA(Ala) + AMP + diphosphate. Its function is as follows. Catalyzes the attachment of alanine to tRNA(Ala) in a two-step reaction: alanine is first activated by ATP to form Ala-AMP and then transferred to the acceptor end of tRNA(Ala). Also edits incorrectly charged Ser-tRNA(Ala) and Gly-tRNA(Ala) via its editing domain. This chain is Alanine--tRNA ligase, found in Pseudomonas putida (strain GB-1).